A 212-amino-acid polypeptide reads, in one-letter code: Probable nicotinate-nucleotide adenylyltransferase (212 aa).

This sequence belongs to the NadD family.

The catalysed reaction is nicotinate beta-D-ribonucleotide + ATP + H(+) = deamido-NAD(+) + diphosphate. It functions in the pathway cofactor biosynthesis; NAD(+) biosynthesis; deamido-NAD(+) from nicotinate D-ribonucleotide: step 1/1. Its function is as follows. Catalyzes the reversible adenylation of nicotinate mononucleotide (NaMN) to nicotinic acid adenine dinucleotide (NaAD). In Saccharopolyspora erythraea (strain ATCC 11635 / DSM 40517 / JCM 4748 / NBRC 13426 / NCIMB 8594 / NRRL 2338), this protein is Probable nicotinate-nucleotide adenylyltransferase.